Consider the following 256-residue polypeptide: Cell division protein ZapD (256 aa).

This sequence belongs to the ZapD family. In terms of assembly, interacts with FtsZ.

Its subcellular location is the cytoplasm. Cell division factor that enhances FtsZ-ring assembly. Directly interacts with FtsZ and promotes bundling of FtsZ protofilaments, with a reduction in FtsZ GTPase activity. The sequence is that of Cell division protein ZapD from Aromatoleum aromaticum (strain DSM 19018 / LMG 30748 / EbN1) (Azoarcus sp. (strain EbN1)).